We begin with the raw amino-acid sequence, 395 residues long: Putative carbonic anhydrase 1 (395 aa).

A signal peptide spans 1 to 24; that stretch reads MKLQGAGCVVAAVLGALFIVNVES. One can recognise an Alpha-carbonic anhydrase domain in the interval 42–365; sequence ISYDVRSTIG…LNDRPVFLVR (324 aa). Zn(2+)-binding residues include histidine 139, histidine 141, and histidine 165.

It belongs to the alpha-carbonic anhydrase family. The cofactor is Zn(2+). As to expression, component of the acid-insoluble and acid-soluble organic matrix of calcified layers of the shell (at protein level).

It is found in the secreted. The catalysed reaction is hydrogencarbonate + H(+) = CO2 + H2O. Reversible hydration of carbon dioxide. The protein is Putative carbonic anhydrase 1 of Lottia gigantea (Giant owl limpet).